A 454-amino-acid chain; its full sequence is MWRTPASTGPLRQDRQMFFHATLARSFINALSVRGDDDAVDRLNYYYTPLILAVCCLVISAKQYGGTPIECWVNPHSRESMEEYIESYCWIQNTYWIPMYENVPDDHTAREEKQIGYYQWVPFILIAEALMFSLPCIFWRLCSFQSGLNIQTLINAACDGQALLDASDRQKAVEAITTNFVDNLDLQSPNGRIRARGWIARIKFSRFLSGQCLSILHSFTKLLYSMNVVAQFLILNACLKSSDFLFFGFQVLNDIWAGRPWTETGHFPRVTLCDFEVRYLANLNRYTVQCALLINIINEKVFAFLWCWYMILAIITTCSFIYWIANSFIHSEKVDYVMKFIQIAESSEFKKLQKFEKDATVERLYTVIAFAPHLLDTFVSDFLKSDGVLMLRMISNHAGDMIVVQLVRNLWQEFRERNWREFEEHEEMKDVEMRRIHGGERIVISNPGQTKSFL.

Residues 1-48 are Cytoplasmic-facing; sequence MWRTPASTGPLRQDRQMFFHATLARSFINALSVRGDDDAVDRLNYYYT. A helical transmembrane segment spans residues 49 to 69; sequence PLILAVCCLVISAKQYGGTPI. The Extracellular segment spans residues 70 to 118; it reads ECWVNPHSRESMEEYIESYCWIQNTYWIPMYENVPDDHTAREEKQIGYY. A helical transmembrane segment spans residues 119-139; the sequence is QWVPFILIAEALMFSLPCIFW. Topologically, residues 140 to 214 are cytoplasmic; that stretch reads RLCSFQSGLN…SRFLSGQCLS (75 aa). The chain crosses the membrane as a helical span at residues 215–235; sequence ILHSFTKLLYSMNVVAQFLIL. The Extracellular portion of the chain corresponds to 236–300; sequence NACLKSSDFL…ALLINIINEK (65 aa). The chain crosses the membrane as a helical span at residues 301–321; sequence VFAFLWCWYMILAIITTCSFI. Topologically, residues 322 to 454 are cytoplasmic; the sequence is YWIANSFIHS…SNPGQTKSFL (133 aa).

The protein belongs to the pannexin family. As to expression, specifically expressed in sensory neurons and interneurons in the head and tail. Expressed in neurons AWC, ASH, AFD, ASI, ADL, ASK, BAG, AWB, and ADF (head sensory neurons); ADA, AIZ, RIC, AIY, and AIM (head interneurons); PHA and PHB (tail sensory neurons); and PVC and PVQ (tail interneurons).

Its subcellular location is the cell membrane. The protein localises to the cell junction. It localises to the gap junction. Functionally, structural component of the gap junctions that specifically coordinates left-right asymmetry in the developing nervous system. Acts by forming gap junction network linking embryonic neurons and providing electrical coupling between cells, leading to promote or inhibit AWC signaling. Required for the left and right AWC olfactory neurons to establish asymmetric patterns of gene expression during embryogenesis. Acts autonomously. The protein is Innexin-19 (inx-19) of Caenorhabditis elegans.